The chain runs to 432 residues: Monoacylglycerol lipase ABHD2 (432 aa).

Residues 1 to 14 lie on the Cytoplasmic side of the membrane; the sequence is MNTHESEVYTVAPE. The chain crosses the membrane as a helical; Signal-anchor for type II membrane protein span at residues 15–35; it reads MPAMFDGMKLAAVATVLYVIV. Topologically, residues 36–432 are extracellular; sequence RCLNLKSPTA…NQTTCQENTS (397 aa). The AB hydrolase-1 domain occupies 132–383; sequence TMVICPGIGN…HGGHLGFFEG (252 aa). Asn-141 carries an N-linked (GlcNAc...) asparagine glycan. Ser-212 acts as the Nucleophile in catalysis. N-linked (GlcNAc...) asparagine glycosylation occurs at Asn-225. Catalysis depends on charge relay system residues Asp-346 and His-377. The disordered stretch occupies residues 413–432; sequence PPCQSKDAQSNQTTCQENTS. Over residues 418-432 the composition is skewed to polar residues; that stretch reads KDAQSNQTTCQENTS. A glycan (N-linked (GlcNAc...) asparagine) is linked at Asn-423.

Belongs to the AB hydrolase superfamily. AB hydrolase 4 family.

The protein resides in the cell membrane. The enzyme catalyses Hydrolyzes glycerol monoesters of long-chain fatty acids.. It catalyses the reaction an acetyl ester + H2O = an aliphatic alcohol + acetate + H(+). The catalysed reaction is a triacylglycerol + H2O = a diacylglycerol + a fatty acid + H(+). It carries out the reaction 2-(5Z,8Z,11Z,14Z-eicosatetraenoyl)-glycerol + H2O = glycerol + (5Z,8Z,11Z,14Z)-eicosatetraenoate + H(+). The enzyme catalyses a butanoate ester + H2O = an aliphatic alcohol + butanoate + H(+). It catalyses the reaction hexadecanoate ester + H2O = an aliphatic alcohol + hexadecanoate + H(+). With respect to regulation, acylglycerol lipase activity is activated upon binding to progesterone. Progesterone-dependent acylglycerol lipase that catalyzes hydrolysis of endocannabinoid arachidonoylglycerol (AG) from cell membrane. Acts as a progesterone receptor: progesterone-binding activates the acylglycerol lipase activity, mediating degradation of 1-arachidonoylglycerol (1AG) and 2-arachidonoylglycerol (2AG) to glycerol and arachidonic acid (AA). Also displays an ester hydrolase activity against acetyl ester, butanoate ester and hexadecanoate ester. Plays a key role in sperm capacitation in response to progesterone by mediating degradation of 2AG, an inhibitor of the sperm calcium channel CatSper, leading to calcium influx via CatSper and sperm activation. May also play a role in smooth muscle cells migration. In Danio rerio (Zebrafish), this protein is Monoacylglycerol lipase ABHD2 (abhd2a).